A 328-amino-acid chain; its full sequence is ABC transporter I family member 20 (328 aa).

Residues 14–257 (VEISGLRFTY…SKKSLMRTVE (244 aa)) enclose the ABC transporter domain. An ATP-binding site is contributed by 55–62 (GSNGAGKT). A disordered region spans residues 263–295 (ERDEERKRRKERKANGLPEFETRTEESRVTGDP). Residues 282-291 (FETRTEESRV) show a composition bias toward basic and acidic residues.

The protein belongs to the ABC transporter superfamily. ABCI family.

The protein resides in the cytoplasm. In Arabidopsis thaliana (Mouse-ear cress), this protein is ABC transporter I family member 20 (ABCI20).